The chain runs to 43 residues: Lanthionine-containing peptide SapB (43 aa).

A signal peptide spans 1–21; that stretch reads MALLDLQAMDTPAEDSFGELR. 2 cross-links (lanthionine (Ser-Cys)) span residues 24–31 and 34–41; these read SQVSLLVC and SSLSVVLC. 2,3-didehydroalanine (Ser) occurs at positions 27 and 37.

The protein belongs to the lanthionine-containing morphogen protein family. In terms of processing, maturation involves the enzymatic conversion of Ser into dehydrated AA and the formation of thioether bonds with cysteine. This is followed by membrane translocation and cleavage of the modified precursor.

Functionally, lanthionine-containing peptide devoid of antibiotic properties, involved in the formation of aerial mycelium. Suggested to self-assemble at air-water interfaces, thus providing a film of surfactant through which nascent aerial hyphae can emerge. The aerial hyphae differentiate further into spores. The protein is Lanthionine-containing peptide SapB (ramS) of Streptomyces griseus.